We begin with the raw amino-acid sequence, 83 residues long: Small ribosomal subunit protein uS17 (83 aa).

The protein belongs to the universal ribosomal protein uS17 family. Part of the 30S ribosomal subunit.

One of the primary rRNA binding proteins, it binds specifically to the 5'-end of 16S ribosomal RNA. The sequence is that of Small ribosomal subunit protein uS17 from Francisella tularensis subsp. holarctica (strain FTNF002-00 / FTA).